Reading from the N-terminus, the 265-residue chain is uncharacterized protein (265 aa).

CBS domains are found at residues 9-64 and 67-126; these read MTKK…EKVE and MTKR…TTPK.

This is an uncharacterized protein from Methanocaldococcus jannaschii (strain ATCC 43067 / DSM 2661 / JAL-1 / JCM 10045 / NBRC 100440) (Methanococcus jannaschii).